The following is a 293-amino-acid chain: Ribonuclease H2 subunit B (293 aa).

A disordered region spans residues 251 to 278 (KRPQNSDITSSLLKKPNRKQATKKSKYF). Positions 265-276 (KPNRKQATKKSK) are enriched in basic residues.

This sequence belongs to the RNase H2 subunit B family. Component of the RNase H2 complex.

It localises to the nucleus. The protein resides in the cytoplasm. Non catalytic subunit of RNase H2, an endonuclease that specifically degrades the RNA of RNA:DNA hybrids. Participates in DNA replication, possibly by mediating the removal of lagging-strand Okazaki fragment RNA primers during DNA replication. Mediates the excision of single ribonucleotides from DNA:RNA duplexes. This chain is Ribonuclease H2 subunit B (rnh202), found in Schizosaccharomyces pombe (strain 972 / ATCC 24843) (Fission yeast).